Here is a 580-residue protein sequence, read N- to C-terminus: Glypican-3 (580 aa).

Positions 1–24 (MAGTVRTACLVVAMLLSLDFPGQA) are cleaved as a signal peptide. Residue Gln25 is modified to Pyrrolidone carboxylic acid. 7 disulfides stabilise this stretch: Cys35–Cys72, Cys65–Cys262, Cys73–Cys265, Cys197–Cys349, Cys252–Cys285, Cys274–Cys422, and Cys278–Cys410. Asn124 and Asn241 each carry an N-linked (GlcNAc...) asparagine glycan. Ser352 is modified (phosphoserine). Asn418 is a glycosylation site (N-linked (GlcNAc...) asparagine). Ser495 and Ser509 each carry an O-linked (Xyl...) (glycosaminoglycan) serine glycan. Asn554 carries the GPI-anchor amidated asparagine lipid modification. Positions 555–580 (LGNVHSPLKLLTSMAISVVCFFFLVH) are cleaved as a propeptide — removed in mature form.

Belongs to the glypican family. As to quaternary structure, heterodimer; disulfide-linked. Cleavage by a furin-like convertase results in production of alpha and beta chains which form a disulfide-linked heterodimer. Interacts with DPP4. Interacts with FGF2. Interacts with WNT5A. Also interacts with WNT3A and WNT7B. Interacts with hedgehog protein SHH; the heparan sulfate chains are not required for the interaction. Also interacts with hedgehog protein IHH. Interacts with CD81. Interacts with Wnt receptors FZD4, FZD7 and FZD8; the heparan sulfate chains are required for the interaction. O-glycosylated; contains heparan sulfate and/or chondroitin sulfate. In terms of processing, cleaved intracellularly by a furin-like convertase to generate 2 subunits, alpha and beta, which remain associated through disulfide bonds and are associated with the cell surface via the GPI-anchor. This processing is essential for its role in inhibition of hedgehog signaling. A second proteolytic event may result in cleavage of the protein on the cell surface, separating it from the GPI-anchor and leading to its shedding from the cell surface.

It is found in the cell membrane. Functionally, cell surface proteoglycan. Negatively regulates the hedgehog signaling pathway when attached via the GPI-anchor to the cell surface by competing with the hedgehog receptor PTC1 for binding to hedgehog proteins. Binding to the hedgehog protein SHH triggers internalization of the complex by endocytosis and its subsequent lysosomal degradation. Positively regulates the canonical Wnt signaling pathway by binding to the Wnt receptor Frizzled and stimulating the binding of the Frizzled receptor to Wnt ligands. Positively regulates the non-canonical Wnt signaling pathway. Binds to CD81 which decreases the availability of free CD81 for binding to the transcriptional repressor HHEX, resulting in nuclear translocation of HHEX and transcriptional repression. Inhibits the dipeptidyl peptidase activity of DPP4. Plays a role in limb patterning and skeletal development by controlling the cellular response to BMP4. Modulates the effects of growth factors BMP2, BMP7 and FGF7 on renal branching morphogenesis. Required for coronary vascular development. Plays a role in regulating cell movements during gastrulation. The chain is Glypican-3 (GPC3) from Pan troglodytes (Chimpanzee).